The primary structure comprises 147 residues: UPF0306 protein YhbP (147 aa).

It belongs to the UPF0306 family.

The chain is UPF0306 protein YhbP from Salmonella paratyphi A (strain AKU_12601).